Here is a 289-residue protein sequence, read N- to C-terminus: DNA repair protein rad14 (289 aa).

Cysteine 116, cysteine 119, cysteine 137, and cysteine 140 together coordinate Zn(2+). The segment at 116–140 (CFECDSIELDTKYFDIFHCRVCHTC) is a zinc-finger region.

This sequence belongs to the XPA family. In terms of assembly, interacts with hrq1.

The protein localises to the nucleus. Involved in nucleotide excision repair (NER). Functional in repair of ultraviolet radiation induced damages and in mitotic mutation avoidance. Binds damaged DNA. Binds specifically to base-base mismatches or small insertion/deletion loops with unpaired nucleotides. Maintains GT repeat stability. Functions as a part of the short-patch excision repair system. The protein is DNA repair protein rad14 of Schizosaccharomyces pombe (strain 972 / ATCC 24843) (Fission yeast).